A 477-amino-acid chain; its full sequence is Actin-related protein 7 (477 aa).

It belongs to the actin family. As to quaternary structure, forms a heterodimer with ARP9. Interacts with NPL6. Component of the two forms of the RSC complex composed of at least either RSC1 or RSC2, and ARP7, ARP9, LDB7, NPL6, RSC3, RSC30, RSC4, RSC58, RSC6, RSC8, RSC9, SFH1, STH1, HTL1 and probably RTT102. The complexes interact with histone and histone variant components of centromeric chromatin. Component of the SWI/SNF global transcription activator complex. The 1.14 MDa SWI/SNF complex is composed of 11 different subunits: one copy each of SWI1, SNF2/SWI2, SNF5, SNF12/SWP73, ARP7/SWP61, ARP9/SWP59; two copies each of SWI3, SNF6, SNF11, SWP82; and three copies of TAF14/SWP29.

The protein localises to the nucleus. Functionally, component of the chromatin structure remodeling complex (RSC), which is involved in transcription regulation and nucleosome positioning. RSC is responsible for the transfer of a histone octamer from a nucleosome core particle to naked DNA. The reaction requires ATP and involves an activated RSC-nucleosome intermediate. Remodeling reaction also involves DNA translocation, DNA twist and conformational change. As a reconfigurer of centromeric and flanking nucleosomes, RSC complex is required both for proper kinetochore function in chromosome segregation and, via a PKC1-dependent signaling pathway, for organization of the cellular cytoskeleton. This subunit is involved in transcriptional regulation. Heterodimer of ARP7 and ARP9 functions with HMG box proteins to facilitate proper chromatin architecture. Heterodimer formation is necessary for assembly into RSC complex. Part of the SWI/SNF complex, an ATP-dependent chromatin remodeling complex, is required for the positive and negative regulation of gene expression of a large number of genes. It changes chromatin structure by altering DNA-histone contacts within a nucleosome, leading eventually to a change in nucleosome position, thus facilitating or repressing binding of gene-specific transcription factors. The polypeptide is Actin-related protein 7 (ARP7) (Saccharomyces cerevisiae (strain ATCC 204508 / S288c) (Baker's yeast)).